The sequence spans 483 residues: Glutamyl-tRNA(Gln) amidotransferase subunit A (483 aa).

Residues Lys-77 and Ser-152 each act as charge relay system in the active site. Ser-176 (acyl-ester intermediate) is an active-site residue.

The protein belongs to the amidase family. GatA subfamily. As to quaternary structure, heterotrimer of A, B and C subunits.

The enzyme catalyses L-glutamyl-tRNA(Gln) + L-glutamine + ATP + H2O = L-glutaminyl-tRNA(Gln) + L-glutamate + ADP + phosphate + H(+). In terms of biological role, allows the formation of correctly charged Gln-tRNA(Gln) through the transamidation of misacylated Glu-tRNA(Gln) in organisms which lack glutaminyl-tRNA synthetase. The reaction takes place in the presence of glutamine and ATP through an activated gamma-phospho-Glu-tRNA(Gln). The chain is Glutamyl-tRNA(Gln) amidotransferase subunit A from Listeria monocytogenes serotype 4b (strain F2365).